Here is a 226-residue protein sequence, read N- to C-terminus: NADH-ubiquinone oxidoreductase 19.3 kDa subunit, mitochondrial (226 aa).

The disordered stretch occupies residues 40 to 68; it reads ATGAVAPAGAQHGIARRERREVPLPSQEG. The [4Fe-4S] cluster site is built by C101, C102, C166, and C196.

The protein belongs to the complex I 20 kDa subunit family. Complex I is composed of about 40 different subunits. This is a component of the iron-sulfur (IP) fragment of the enzyme. [4Fe-4S] cluster is required as a cofactor.

The protein resides in the mitochondrion. The catalysed reaction is a ubiquinone + NADH + 5 H(+)(in) = a ubiquinol + NAD(+) + 4 H(+)(out). In terms of biological role, core subunit of the mitochondrial membrane respiratory chain NADH dehydrogenase (Complex I) that is believed to belong to the minimal assembly required for catalysis. Complex I functions in the transfer of electrons from NADH to the respiratory chain. The immediate electron acceptor for the enzyme is believed to be ubiquinone. In Neurospora crassa (strain ATCC 24698 / 74-OR23-1A / CBS 708.71 / DSM 1257 / FGSC 987), this protein is NADH-ubiquinone oxidoreductase 19.3 kDa subunit, mitochondrial.